The primary structure comprises 257 residues: RING-H2 finger protein ATL5 (257 aa).

Residues 28-48 (IMLASVIILFVAVILILCFHS) traverse the membrane as a helical segment. The RING-type; atypical zinc finger occupies 113–155 (CSVCLSEFEEDDEGRVLPKCGHVFHVDCIDTWFRSRSSCPLCR). Residues 181–209 (EDTEAGSSSSSDESESSTPSSSSGSPVRF) are disordered. The segment covering 185-206 (AGSSSSSDESESSTPSSSSGSP) has biased composition (low complexity).

Belongs to the RING-type zinc finger family. ATL subfamily.

The protein localises to the membrane. The catalysed reaction is S-ubiquitinyl-[E2 ubiquitin-conjugating enzyme]-L-cysteine + [acceptor protein]-L-lysine = [E2 ubiquitin-conjugating enzyme]-L-cysteine + N(6)-ubiquitinyl-[acceptor protein]-L-lysine.. Its pathway is protein modification; protein ubiquitination. This chain is RING-H2 finger protein ATL5 (ATL5), found in Arabidopsis thaliana (Mouse-ear cress).